A 597-amino-acid polypeptide reads, in one-letter code: Ribosomal oxygenase 1 (597 aa).

Methionine 1 is modified (N-acetylmethionine). Residues 1–138 form a disordered region; it reads MDELPNGNGA…HVDDPERPWD (138 aa). Basic residues-rich tracts occupy residues 14 to 24 and 37 to 48; these read KRGRGRRRRQP and RPRKVRRHRKSA. Residues 49–62 are compositionally biased toward low complexity; the sequence is ASRVAALRARALLS. Phosphoserine is present on residues serine 62 and serine 65. The segment covering 72–81 has biased composition (basic and acidic residues); the sequence is VRGKRERPAE. A Phosphoserine modification is found at serine 86. The JmjC domain occupies 250 to 395; that stretch reads CSLRLLCPQA…DFLEAVLPLA (146 aa). Fe cation contacts are provided by histidine 296, aspartate 298, and histidine 361.

Belongs to the ROX family. NO66 subfamily. In terms of assembly, interacts with SP7/OSX; the interaction is direct. Interacts with MYC. Interacts with PHF19; leading to its recruitment to H3K36me3 sites. The cofactor is Fe(2+).

It localises to the nucleus. The protein localises to the nucleolus. It is found in the nucleoplasm. The catalysed reaction is N(6),N(6)-dimethyl-L-lysyl(36)-[histone H3] + 2 2-oxoglutarate + 2 O2 = L-lysyl(36)-[histone H3] + 2 formaldehyde + 2 succinate + 2 CO2. It catalyses the reaction N(6)-methyl-L-lysyl-[protein] + 2-oxoglutarate + O2 = L-lysyl-[protein] + formaldehyde + succinate + CO2. It carries out the reaction L-histidyl-[protein] + 2-oxoglutarate + O2 = (3S)-3-hydroxy-L-histidyl-[protein] + succinate + CO2. Its function is as follows. Oxygenase that can act as both a histone lysine demethylase and a ribosomal histidine hydroxylase. Specifically demethylates 'Lys-4' (H3K4me) and 'Lys-36' (H3K36me) of histone H3, thereby playing a central role in histone code. Preferentially demethylates trimethylated H3 'Lys-4' (H3K4me3) and monomethylated H3 'Lys-4' (H3K4me1) residues, while it has weaker activity for dimethylated H3 'Lys-36' (H3K36me2). Acts as a regulator of osteoblast differentiation via its interaction with SP7/OSX by demethylating H3K4me and H3K36me, thereby inhibiting SP7/OSX-mediated promoter activation. Also catalyzes demethylation of non-histone proteins, such as CGAS: demethylation of monomethylated CGAS promotes interaction between CGAS and PARP1, followed by PARP1 inactivation. Also catalyzes the hydroxylation of 60S ribosomal protein L8 on 'His-216', thereby playing a role in ribosome biogenesis. Participates in MYC-induced transcriptional activation. The polypeptide is Ribosomal oxygenase 1 (Rattus norvegicus (Rat)).